We begin with the raw amino-acid sequence, 378 residues long: Beta-1,3-N-acetylglucosaminyltransferase lunatic fringe (378 aa).

The Cytoplasmic segment spans residues 1–8 (MLQRCGRR). The chain crosses the membrane as a helical; Signal-anchor for type II membrane protein span at residues 9–29 (LLLALVGALLACLLVLTADPP). Topologically, residues 30 to 378 (PTPMPAERGR…TPWCPRSAIF (349 aa)) are lumenal. Residues 85–108 (RDADPPPGVASRQGDGHPRPPAEV) form a disordered region. Arginine 128 contacts substrate. Asparagine 166 carries N-linked (GlcNAc...) asparagine glycosylation. Disulfide bonds link cysteine 167–cysteine 178 and cysteine 196–cysteine 259. Aspartate 200 is a substrate binding site. Aspartate 201 lines the Mn(2+) pocket. Aspartate 289 is an active-site residue. Mn(2+) is bound at residue histidine 313. An intrachain disulfide couples cysteine 363 to cysteine 372.

It belongs to the glycosyltransferase 31 family. It depends on Mn(2+) as a cofactor. The cofactor is Co(2+). A soluble form may be derived from the membrane form by proteolytic processing. In terms of tissue distribution, detected at 12.5 dpc in all tissues examined with the highest level observed in adult brain and spleen. Detected in the dental epithelium.

The protein localises to the golgi apparatus. It is found in the golgi apparatus membrane. It carries out the reaction 3-O-(alpha-L-fucosyl)-L-threonyl-[EGF-like domain protein] + UDP-N-acetyl-alpha-D-glucosamine = 3-O-(N-acetyl-beta-D-glucosaminyl-(1-&gt;3)-alpha-L-fucosyl)-L-threonyl-[EGF-like domain protein] + UDP + H(+). The catalysed reaction is 3-O-(alpha-L-fucosyl)-L-seryl-[EGF-like domain protein] + UDP-N-acetyl-alpha-D-glucosamine = 3-O-(N-acetyl-beta-D-glucosaminyl-(1-&gt;3)-alpha-L-fucosyl)-L-seryl-[EGF-like domain protein] + UDP + H(+). In terms of biological role, glycosyltransferase that initiates the elongation of O-linked fucose residues attached to EGF-like repeats in the extracellular domain of Notch molecules. Modulates NOTCH1 activity by modifying O-fucose residues at specific EGF-like domains resulting in inhibition of NOTCH1 activation by JAG1 and enhancement of NOTCH1 activation by DLL1 via an increase in its binding to DLL1. Decreases the binding of JAG1 to NOTCH2 but not that of DLL1. Essential mediator of somite segmentation and patterning. During somite boundary formation, it restricts Notch activity in the presomitic mesoderm to a boundary-forming territory in the posterior half of the prospective somite. In this region, Notch function activates a set of genes that are involved in boundary formation and in anterior-posterior somite identity. Ectopically expressed in the thymus, Lfgn inhibits Notch signaling which results in inhibition of T-cell commitment and promotes B-cell development in lymphoid progenitors. May play a role in boundary formation of the enamel knot. In Mus musculus (Mouse), this protein is Beta-1,3-N-acetylglucosaminyltransferase lunatic fringe.